A 156-amino-acid chain; its full sequence is Snaclec subunit B (156 aa).

The signal sequence occupies residues Met-1–Ala-23. 3 disulfide bridges follow: Cys-25–Cys-36, Cys-53–Cys-144, and Cys-119–Cys-136. The C-type lectin domain occupies Tyr-32–Lys-145.

This sequence belongs to the snaclec family. Heterodimer of subunits A and B; disulfide-linked. Expressed by the venom gland.

The protein resides in the secreted. In terms of biological role, interferes with one step of hemostasis (modulation of platelet aggregation, or coagulation cascade, for example). The protein is Snaclec subunit B of Philodryas olfersii (Green snake).